The sequence spans 185 residues: Adenine phosphoribosyltransferase (185 aa).

It belongs to the purine/pyrimidine phosphoribosyltransferase family. In terms of assembly, homodimer.

It localises to the cytoplasm. It carries out the reaction AMP + diphosphate = 5-phospho-alpha-D-ribose 1-diphosphate + adenine. It participates in purine metabolism; AMP biosynthesis via salvage pathway; AMP from adenine: step 1/1. Catalyzes a salvage reaction resulting in the formation of AMP, that is energically less costly than de novo synthesis. This Rubrobacter xylanophilus (strain DSM 9941 / JCM 11954 / NBRC 16129 / PRD-1) protein is Adenine phosphoribosyltransferase.